A 273-amino-acid polypeptide reads, in one-letter code: MTNTFSIGNNMNVGLGAPLLLIAGPCVIENEEKTLEIAERIKGIVRDMDVNFVFKASFDKANRTSIDSFRGPGLEQGLAILGKVKSRLGLPVISDVHSPDQVGPASEVLDILQIPAFLCRQTDLLTAAGNSGKPVNVKKGQFVGPWDMKHVTGKVLSTGNERIMLTERGSSFGYNNLVVDFRNFSIMRDLGFPVVFDATHSVQMPGGLGSCSGGDRSYVPLLARAAAAAGVDGVFFEVHTDPDKALCDGPNSLTMEMLESILPQLLAIRKAAS.

This sequence belongs to the KdsA family.

It is found in the cytoplasm. It catalyses the reaction D-arabinose 5-phosphate + phosphoenolpyruvate + H2O = 3-deoxy-alpha-D-manno-2-octulosonate-8-phosphate + phosphate. The protein operates within carbohydrate biosynthesis; 3-deoxy-D-manno-octulosonate biosynthesis; 3-deoxy-D-manno-octulosonate from D-ribulose 5-phosphate: step 2/3. It participates in bacterial outer membrane biogenesis; lipopolysaccharide biosynthesis. The polypeptide is 2-dehydro-3-deoxyphosphooctonate aldolase (Desulfatibacillum aliphaticivorans).